A 432-amino-acid polypeptide reads, in one-letter code: EF-hand calcium-binding domain-containing protein 3 (432 aa).

EF-hand domains follow at residues 45–80 and 81–116; these read AQLE…LGMN and LNAY…KKLF. Ca(2+) contacts are provided by Asp-94, Asp-96, Asp-98, Lys-100, and Asp-105. Tyr-273 is modified (phosphotyrosine). The interval 394 to 432 is disordered; it reads NVNKTSPSNSGLSSPSDLSESDPETGRKRKRKSSRGFRQ. The segment covering 399–411 has biased composition (low complexity); it reads SPSNSGLSSPSDL. The segment covering 420–432 has biased composition (basic residues); that stretch reads RKRKRKSSRGFRQ.

The sequence is that of EF-hand calcium-binding domain-containing protein 3 (Efcab3) from Rattus norvegicus (Rat).